Consider the following 345-residue polypeptide: MMLAIGKRRYVRTRQYPARKVKIVSEATELLQKYPYVFLFDLHGLSSRILHEYRYRLRRYGVIKIIKPTLFKIAFTKVYGGIPAEIAEKVRGEVGFFFTSFNPAEVIKIVAENSVRRAAQPGDKAPFDIVVPAGPTNASPGPIISKFGKLKIPTRVQEGKIWIAKDTVVAKAGQEITPEMAEVLRVVGIEPIFEQLRLLGVIWRGQRFVDISELIIDVNKYKELFETASVYARNLALNIVYPTREVLQAVIPAAHMRAVALAAKLGVVTRETLPALLSRAVAEANALAAVVAAKAPDLGISVSLPQTAAPQQTPQPTEAPKEEAQEEKKEGPSEEEIAGSLASLF.

A disordered region spans residues 303 to 345 (SLPQTAAPQQTPQPTEAPKEEAQEEKKEGPSEEEIAGSLASLF). The span at 305-318 (PQTAAPQQTPQPTE) shows a compositional bias: low complexity. The span at 319–332 (APKEEAQEEKKEGP) shows a compositional bias: basic and acidic residues.

The protein belongs to the universal ribosomal protein uL10 family. Part of the 50S ribosomal subunit. Forms part of the ribosomal stalk which helps the ribosome interact with GTP-bound translation factors. Forms a heptameric L10(L12)2(L12)2(L12)2 complex, where L10 forms an elongated spine to which the L12 dimers bind in a sequential fashion.

Functionally, forms part of the ribosomal stalk, playing a central role in the interaction of the ribosome with GTP-bound translation factors. The polypeptide is Large ribosomal subunit protein uL10 (Pyrobaculum aerophilum (strain ATCC 51768 / DSM 7523 / JCM 9630 / CIP 104966 / NBRC 100827 / IM2)).